The primary structure comprises 344 residues: Aspartate-semialdehyde dehydrogenase (344 aa).

NADP(+) contacts are provided by residues 10–13 (TGQV) and 38–39 (RS). Phosphate is bound at residue arginine 101. Cysteine 131 (acyl-thioester intermediate) is an active-site residue. Glutamine 158 serves as a coordination point for substrate. Position 161–162 (161–162 (SG)) interacts with NADP(+). A phosphate-binding site is contributed by lysine 228. Arginine 250 contacts substrate. Histidine 257 acts as the Proton acceptor in catalysis. Asparagine 326 contributes to the NADP(+) binding site.

This sequence belongs to the aspartate-semialdehyde dehydrogenase family. Homodimer.

It carries out the reaction L-aspartate 4-semialdehyde + phosphate + NADP(+) = 4-phospho-L-aspartate + NADPH + H(+). It participates in amino-acid biosynthesis; L-lysine biosynthesis via DAP pathway; (S)-tetrahydrodipicolinate from L-aspartate: step 2/4. It functions in the pathway amino-acid biosynthesis; L-methionine biosynthesis via de novo pathway; L-homoserine from L-aspartate: step 2/3. Its pathway is amino-acid biosynthesis; L-threonine biosynthesis; L-threonine from L-aspartate: step 2/5. In terms of biological role, catalyzes the NADPH-dependent formation of L-aspartate-semialdehyde (L-ASA) by the reductive dephosphorylation of L-aspartyl-4-phosphate. The polypeptide is Aspartate-semialdehyde dehydrogenase (Corynebacterium melassecola).